The chain runs to 212 residues: MKSNKKILFIGAPGSGKGTISKILVEKYKLVHISTGDLFRKKISEDSRFAAQIQNYLSSGSYVPDEITNKLVADFIKKIPKNQGYILDGYPRTLQQLEFMIKNGINLDCVFYLKIKNETIISRLSQRLFCQKCQKSYNLLLAKPKNGLKCDLDNTDLITRNDDRPEIITHRIEKFNNSVIPIVEFFKKSGIIYYLDAEQTLEETVIEIEKWL.

ATP is bound at residue 14 to 19 (GSGKGT). The segment at 34–63 (STGDLFRKKISEDSRFAAQIQNYLSSGSYV) is NMP. AMP contacts are provided by residues T35, R40, 61–63 (SYV), 89–92 (GYPR), and Q96. Residues 126–163 (QRLFCQKCQKSYNLLLAKPKNGLKCDLDNTDLITRNDD) are LID. Residue R127 participates in ATP binding. 2 residues coordinate Zn(2+): C130 and C133. 136-137 (SY) provides a ligand contact to ATP. The Zn(2+) site is built by C150 and D153. AMP is bound by residues R160 and R171. Q199 provides a ligand contact to ATP.

Belongs to the adenylate kinase family. Monomer.

Its subcellular location is the cytoplasm. It catalyses the reaction AMP + ATP = 2 ADP. It functions in the pathway purine metabolism; AMP biosynthesis via salvage pathway; AMP from ADP: step 1/1. Catalyzes the reversible transfer of the terminal phosphate group between ATP and AMP. Plays an important role in cellular energy homeostasis and in adenine nucleotide metabolism. In Mesomycoplasma hyopneumoniae (strain 232) (Mycoplasma hyopneumoniae), this protein is Adenylate kinase.